The sequence spans 304 residues: Quinolinate synthase (304 aa).

Iminosuccinate is bound by residues His24 and Ser41. Cys86 contributes to the [4Fe-4S] cluster binding site. Residues 112 to 114 (YVN) and Ser129 contribute to the iminosuccinate site. A [4Fe-4S] cluster-binding site is contributed by Cys171. Iminosuccinate contacts are provided by residues 197 to 199 (HPE) and Thr214. Residue Cys259 participates in [4Fe-4S] cluster binding.

The protein belongs to the quinolinate synthase family. Type 2 subfamily. The cofactor is [4Fe-4S] cluster.

It is found in the cytoplasm. The catalysed reaction is iminosuccinate + dihydroxyacetone phosphate = quinolinate + phosphate + 2 H2O + H(+). It functions in the pathway cofactor biosynthesis; NAD(+) biosynthesis; quinolinate from iminoaspartate: step 1/1. Its function is as follows. Catalyzes the condensation of iminoaspartate with dihydroxyacetone phosphate to form quinolinate. This is Quinolinate synthase from Geobacter metallireducens (strain ATCC 53774 / DSM 7210 / GS-15).